The following is a 110-amino-acid chain: Red pigment-concentrating prohormone (110 aa).

Residues 1-25 form the signal peptide; the sequence is MVRRTGVTLLVVALVVVALVSSVSA. Gln26 carries the post-translational modification Pyrrolidone carboxylic acid. Trp33 bears the Tryptophan amide mark.

The protein belongs to the AKH/HRTH/RPCH family.

It localises to the secreted. Its function is as follows. This hormone adapts the animal to light backgrounds by stimulating concentration of the pigment of its red body-chromatophores. The protein is Red pigment-concentrating prohormone of Carcinus maenas (Common shore crab).